A 66-amino-acid chain; its full sequence is uncharacterized protein (66 aa).

Residues 32-49 (WAFSLLIAGSAFLWIYMR) form a helical membrane-spanning segment.

It localises to the membrane. This is an uncharacterized protein from Bacillus subtilis (strain 168).